Reading from the N-terminus, the 392-residue chain is MYIRDLDVRDFRSWPELTLRLKPGITLFVGRNGFGKTNIVEAIGYTAHLSSHRVAHDAPLVRQGAHNARISATAVNQGRELTAHLLIKPHAANQAQINRTRLKSPRELLGVVKTVLFSPEDLSLVRGEPAARRQYLDDIIASRTPRLAGVKADYDKVLKQRNALLKSASPSLRRGYSDSDGASALATLDVWDTQLSSLGAQVIQARLALVDELRELIPAAYAGLAPESRPAAIDYKSTVDISDREVIEAMMLTELATKRQREIERGISLVGPHRDDLVLNLGTSPAKGFASHGETWSYAISLRLAEFNLLRQDGTDPILILDDVFAELDAKRREKLVRLAAGAEQVLITAAVDEDLPGNLQPIERFTVTVRDTDEGRISEIAPYTAGGDEDD.

ATP is bound at residue 30–37; sequence GRNGFGKT.

It belongs to the RecF family.

It is found in the cytoplasm. In terms of biological role, the RecF protein is involved in DNA metabolism; it is required for DNA replication and normal SOS inducibility. RecF binds preferentially to single-stranded, linear DNA. It also seems to bind ATP. The sequence is that of DNA replication and repair protein RecF from Corynebacterium aurimucosum (strain ATCC 700975 / DSM 44827 / CIP 107346 / CN-1) (Corynebacterium nigricans).